The following is a 65-amino-acid chain: SPbeta prophage-derived uncharacterized protein YorO (65 aa).

The polypeptide is SPbeta prophage-derived uncharacterized protein YorO (yorO) (Bacillus subtilis (strain 168)).